A 175-amino-acid polypeptide reads, in one-letter code: MYLTQDLELFHEYTVTQLLFKDVKNATELRKMAVNGEIKGALINPSMVVDAFQILVATNKAVHLHKIGKMKTRSLYSEIIFNLSPTNNISEAFKRFGISDSDTAVHIVLVHNKEETLNIDDIISKVDGQQIDVGQVSEMTDTAKIKKLYKITPQEDKCGTLLDAVVCRMAIKDVA.

This sequence belongs to the CGI121/TPRKB family. In terms of assembly, component of the EKC/KEOPS complex.

It is found in the cytoplasm. The protein localises to the cytosol. It localises to the nucleus. Its function is as follows. Component of the EKC/KEOPS complex that is required for the formation of a threonylcarbamoyl group on adenosine at position 37 (t(6)A37) in tRNAs that read codons beginning with adenine. The complex is probably involved in the transfer of the threonylcarbamoyl moiety of threonylcarbamoyl-AMP (TC-AMP) to the N6 group of A37. Tprkb acts as an allosteric effector that regulates the t(6)A activity of the complex. The sequence is that of EKC/KEOPS complex subunit TPRKB from Danio rerio (Zebrafish).